A 264-amino-acid chain; its full sequence is Thymidylate synthase (264 aa).

R21 is a dUMP binding site. H51 contributes to the (6R)-5,10-methylene-5,6,7,8-tetrahydrofolate binding site. 126–127 is a binding site for dUMP; the sequence is RR. C146 (nucleophile) is an active-site residue. DUMP is bound by residues 166–169, N177, and 207–209; these read RSAD and HIY. D169 is a binding site for (6R)-5,10-methylene-5,6,7,8-tetrahydrofolate. S263 is a (6R)-5,10-methylene-5,6,7,8-tetrahydrofolate binding site.

It belongs to the thymidylate synthase family. Bacterial-type ThyA subfamily. In terms of assembly, homodimer.

The protein resides in the cytoplasm. It carries out the reaction dUMP + (6R)-5,10-methylene-5,6,7,8-tetrahydrofolate = 7,8-dihydrofolate + dTMP. Its pathway is pyrimidine metabolism; dTTP biosynthesis. Its function is as follows. Catalyzes the reductive methylation of 2'-deoxyuridine-5'-monophosphate (dUMP) to 2'-deoxythymidine-5'-monophosphate (dTMP) while utilizing 5,10-methylenetetrahydrofolate (mTHF) as the methyl donor and reductant in the reaction, yielding dihydrofolate (DHF) as a by-product. This enzymatic reaction provides an intracellular de novo source of dTMP, an essential precursor for DNA biosynthesis. This Halalkalibacterium halodurans (strain ATCC BAA-125 / DSM 18197 / FERM 7344 / JCM 9153 / C-125) (Bacillus halodurans) protein is Thymidylate synthase.